The following is a 1066-amino-acid chain: Vinculin (1066 aa).

The segment at 1–835 (MPVFHTRTIE…GAVAKVREAF (835 aa)) is N-terminal globular head. S97 is subject to Phosphoserine. The segment at 168–208 (MTKMAKMIDERQQELTHQEHRVMLVNSMNTVKELLPVLISA) is talin-interaction. K173 carries the post-translational modification N6-acetyllysine. Tandem repeats lie at residues 259–369 (ASKD…KVEN), 370–479 (AARK…KTNR), and 480–589 (AVAN…QMQE). The interval 259-589 (ASKDTEAMKR…LKDLKTQMQE (331 aa)) is 3 X 112 AA tandem repeats. Phosphoserine is present on residues S260, S272, S275, S290, S346, and S434. K496 is subject to N6-acetyllysine. At Y537 the chain carries Phosphotyrosine. Phosphoserine is present on residues S574, S579, and S600. Residues T604 and T672 each carry the phosphothreonine modification. S721 is subject to Phosphoserine. The interval 741–764 (MANIQPQMLVAGATSIARRANRIL) is interaction with ACTN4. 2 positions are modified to phosphoserine: S795 and S809. Position 822 is a phosphotyrosine (Y822). A linker (Pro-rich) region spans residues 836–878 (QPQEPDFPPPPPDLEQLRLTDELAPPKPPLPEGEVPPPRPPPP). Residues 857-887 (ELAPPKPPLPEGEVPPPRPPPPEEKDEEFPE) are disordered. Positions 860 to 876 (PPKPPLPEGEVPPPRPP) are enriched in pro residues. Residues 879-1066 (EEKDEEFPEQ…RWVRKTPWYQ (188 aa)) are C-terminal tail. Facilitates phospholipid membrane insertion stretches follow at residues 935 to 978 (RLVR…KRIR) and 1052 to 1066 (AGFT…PWYQ). Y1065 is subject to Phosphotyrosine; by SRC-type Tyr-kinases.

This sequence belongs to the vinculin/alpha-catenin family. In terms of assembly, exhibits self-association properties. Part of a complex composed of THSD1, PTK2/FAK1, TLN1 and VCL. Interacts with APBB1IP, NRAP and TLN1. Interacts with CTNNB1 and this interaction is necessary for its localization to the cell-cell junctions and for its function in regulating cell surface expression of E-cadherin. Interacts with SORBS1. Interacts with SYNM. Interacts with CTNNA1. Binds to ACTN4; this interaction triggers conformational changes. Interacts with FLII. In terms of processing, phosphorylated; on serines, threonines and tyrosines. Phosphorylation on Tyr-1065 in activated platelets affects head-tail interactions and cell spreading but has no effect on actin binding nor on localization to focal adhesion plaques. Post-translationally, acetylated; mainly by myristic acid but also by a small amount of palmitic acid.

The protein localises to the cell membrane. Its subcellular location is the cell junction. It is found in the adherens junction. It localises to the focal adhesion. The protein resides in the cytoplasm. The protein localises to the cytoskeleton. Its subcellular location is the sarcolemma. It is found in the cell projection. It localises to the podosome. Actin filament (F-actin)-binding protein involved in cell-matrix adhesion and cell-cell adhesion. Regulates cell-surface E-cadherin expression and potentiates mechanosensing by the E-cadherin complex. May also play important roles in cell morphology and locomotion. This chain is Vinculin, found in Rattus norvegicus (Rat).